We begin with the raw amino-acid sequence, 418 residues long: NADH-quinone oxidoreductase subunit D (418 aa).

This sequence belongs to the complex I 49 kDa subunit family. In terms of assembly, NDH-1 is composed of 14 different subunits. Subunits NuoB, C, D, E, F, and G constitute the peripheral sector of the complex.

The protein localises to the cell inner membrane. It carries out the reaction a quinone + NADH + 5 H(+)(in) = a quinol + NAD(+) + 4 H(+)(out). NDH-1 shuttles electrons from NADH, via FMN and iron-sulfur (Fe-S) centers, to quinones in the respiratory chain. The immediate electron acceptor for the enzyme in this species is believed to be ubiquinone. Couples the redox reaction to proton translocation (for every two electrons transferred, four hydrogen ions are translocated across the cytoplasmic membrane), and thus conserves the redox energy in a proton gradient. This Neisseria meningitidis serogroup B (strain ATCC BAA-335 / MC58) protein is NADH-quinone oxidoreductase subunit D.